The chain runs to 142 residues: UPF0102 protein Synpcc7942_0312 (142 aa).

This sequence belongs to the UPF0102 family.

The sequence is that of UPF0102 protein Synpcc7942_0312 from Synechococcus elongatus (strain ATCC 33912 / PCC 7942 / FACHB-805) (Anacystis nidulans R2).